The following is a 1434-amino-acid chain: Probable deoxyribonuclease RhsA (1434 aa).

Residues 14–42 are disordered; that stretch reads AMHAGNRPNPPDDRPQPCRGKPPTSPGKT. 2 helical membrane-spanning segments follow: residues 48 to 68 and 70 to 90; these read FLGALAGAVAGALVAAAVAAA and VFLVGVTGGLAVAAVGALAVF. YD repeat units follow at residues 486–521, 592–628, and 847–876; these read YDAAHRLTRWHDNDQTWARYEYDAQGRCVYTTCADG, DDTGRVSTFTDASGHQWQYDYDAAQRLCGVTDPLGRE, and YDARGLLLRETAPDDTLHYRYDAVGRLTEV.

This sequence belongs to the RHS/WapA nuclease family.

It is found in the membrane. Its function is as follows. Toxic component of a toxin-immunity protein module, which functions as a cellular contact-dependent growth inhibition (CDI) system. This protein may be a nuclease that is specifically inhibited by its cognate immunity protein RhsAI. Upon expression of the C-terminus (residues 1284-1434) in E.coli growth is inhibited, cells elongate, nucleoids condense and plasmid DNA is degraded; these effects are blocked specifically by cognate immunity protein RshIA. Cell contact is necessary for growth inhibition. The chain is Probable deoxyribonuclease RhsA (rhsA) from Dickeya dadantii (strain 3937) (Erwinia chrysanthemi (strain 3937)).